The primary structure comprises 351 residues: Transcription factor bHLH93 (351 aa).

Residues 174–223 (GQPSKNLMAERRRRKRLNDRLSMLRSIVPKISKMDRTSILGDAIDYMKEL) enclose the bHLH domain.

Homodimer. Interacts with FAMA. As to expression, broadly expressed.

It localises to the nucleus. In terms of biological role, transcription factor. May be involved in the differentiation of stomatal guard cells. The polypeptide is Transcription factor bHLH93 (BHLH93) (Arabidopsis thaliana (Mouse-ear cress)).